The chain runs to 395 residues: Phosphoglycerate kinase (395 aa).

Substrate-binding positions include 21-23 (DFN), R36, 59-62 (HLGR), R120, and R153. Residues K203, G294, E325, and 351-354 (GGDS) contribute to the ATP site.

This sequence belongs to the phosphoglycerate kinase family. Monomer.

Its subcellular location is the cytoplasm. The catalysed reaction is (2R)-3-phosphoglycerate + ATP = (2R)-3-phospho-glyceroyl phosphate + ADP. Its pathway is carbohydrate degradation; glycolysis; pyruvate from D-glyceraldehyde 3-phosphate: step 2/5. This Finegoldia magna (strain ATCC 29328 / DSM 20472 / WAL 2508) (Peptostreptococcus magnus) protein is Phosphoglycerate kinase.